The chain runs to 240 residues: Cysteine-rich venom protein triflin (240 aa).

An N-terminal signal peptide occupies residues 1–19 (MIAFIVLPILAAVLQQSSG). Residues 39-166 (DLHNSLRRSV…KYSYFYVCQY (128 aa)) enclose the SCP domain. Intrachain disulfides connect cysteine 75-cysteine 153, cysteine 92-cysteine 167, cysteine 148-cysteine 164, cysteine 186-cysteine 193, cysteine 189-cysteine 198, cysteine 202-cysteine 235, cysteine 211-cysteine 229, and cysteine 220-cysteine 233. Residues 202-235 (CTRENEFTNCDSLVQKSSCQDNYMKSKCPASCFC) enclose the ShKT domain.

Belongs to the CRISP family. In terms of assembly, forms a stable, non-covalent complex with SSP-2. As to expression, expressed by the venom gland.

Its subcellular location is the secreted. Its function is as follows. Blocks contraction of smooth muscle elicited by high potassium-induced depolarization. May target voltage-gated calcium channels (Cav) on smooth muscle. In Protobothrops flavoviridis (Habu), this protein is Cysteine-rich venom protein triflin.